Here is a 496-residue protein sequence, read N- to C-terminus: Aminoacetaldehyde dehydrogenase (496 aa).

NADH is bound by residues Leu166, Trp168, Lys192, Ser246, Thr249, and Tyr256. Glu268 functions as the Proton acceptor in the catalytic mechanism. Cys269 contacts NADH. Catalysis depends on Cys303, which acts as the Nucleophile. The NADH site is built by Lys353 and Glu398.

It belongs to the aldehyde dehydrogenase family. Homotetramer, formed by two symmetrical dimers.

It catalyses the reaction aminoacetaldehyde + NAD(+) + H2O = glycine + NADH + 2 H(+). It carries out the reaction 3-aminopropanal + NAD(+) + H2O = beta-alanine + NADH + 2 H(+). In terms of biological role, NAD(+)-dependent aminoaldehyde dehydrogenase highly efficient with protonated aminoacetaldehyde (ACTAL) and 3-aminopropanaldehyde (APAL). Likely participates in a still uncharacterized metabolic pathway present in proteobacteria species, in which ACTAL might be an intermediate, yielding glycine. Highly prefers NAD(+) over NADP(+). Shows very poor activity with acetaldehyde, propanaldehyde, butanaldehyde, pentanaldehyde, dimethylaminoacetaldehyde, trimethylaminoacetaldehyde (betaine aldehyde), trimethylaminobutanaldehyde, short aliphatic hydroxyaldehydes such as 3-hydroxypropanaldehyde and 2-hydroxypropanaldehyde (lactaldehyde), and aromatic aldehydes. This Pseudomonas aeruginosa (strain ATCC 15692 / DSM 22644 / CIP 104116 / JCM 14847 / LMG 12228 / 1C / PRS 101 / PAO1) protein is Aminoacetaldehyde dehydrogenase.